The sequence spans 205 residues: dITP/XTP pyrophosphatase (205 aa).

11 to 16 (TKNMGK) contacts substrate. Glu-44 and Asp-73 together coordinate Mg(2+). Asp-73 functions as the Proton acceptor in the catalytic mechanism. Substrate-binding positions include Ser-74, 158–161 (FGYD), Lys-181, and 186–187 (HR).

Belongs to the HAM1 NTPase family. As to quaternary structure, homodimer. Mg(2+) is required as a cofactor.

It carries out the reaction XTP + H2O = XMP + diphosphate + H(+). It catalyses the reaction dITP + H2O = dIMP + diphosphate + H(+). The enzyme catalyses ITP + H2O = IMP + diphosphate + H(+). Pyrophosphatase that catalyzes the hydrolysis of nucleoside triphosphates to their monophosphate derivatives, with a high preference for the non-canonical purine nucleotides XTP (xanthosine triphosphate), dITP (deoxyinosine triphosphate) and ITP. Seems to function as a house-cleaning enzyme that removes non-canonical purine nucleotides from the nucleotide pool, thus preventing their incorporation into DNA/RNA and avoiding chromosomal lesions. The chain is dITP/XTP pyrophosphatase from Bacillus thuringiensis subsp. konkukian (strain 97-27).